A 504-amino-acid polypeptide reads, in one-letter code: Prenylcysteine oxidase 1 (504 aa).

An N-terminal signal peptide occupies residues 1 to 28 (MGRFAATLVGSLFGLGLLLCGLGRLASA). Residues N196, N322, and N352 are each glycosylated (N-linked (GlcNAc...) asparagine).

It belongs to the prenylcysteine oxidase family. FAD serves as cofactor. As to expression, expressed mainly in cerebrum.

It is found in the lysosome. It catalyses the reaction an S-polyprenyl-L-cysteine + O2 + H2O = a polyprenal + L-cysteine + H2O2. The enzyme catalyses S-(2E,6E)-farnesyl-L-cysteine + O2 + H2O = (2E,6E)-farnesal + L-cysteine + H2O2. The catalysed reaction is [(2E,6E,10E)-geranylgeranyl]-L-cysteine + O2 + H2O = (2E,6E,10E)-geranylgeranial + L-cysteine + H2O2. Prenylcysteine oxidase that cleaves the thioether bond of prenyl-L-cysteines, such as farnesylcysteine and geranylgeranylcysteine. Only active against free prenylcysteines and not prenylcysteine residues within prenylated proteins or peptides. Involved in the final step in the degradation of prenylated proteins, by degrading prenylcysteines after the protein has been degraded. This Rattus norvegicus (Rat) protein is Prenylcysteine oxidase 1.